Consider the following 87-residue polypeptide: Large ribosomal subunit protein bL27 (87 aa).

The protein belongs to the bacterial ribosomal protein bL27 family.

This chain is Large ribosomal subunit protein bL27, found in Stenotrophomonas maltophilia (strain K279a).